Reading from the N-terminus, the 215-residue chain is Ribosomal RNA small subunit methyltransferase G (215 aa).

S-adenosyl-L-methionine is bound by residues Gly77, Phe82, 130–131, and Arg146; that span reads IE.

Belongs to the methyltransferase superfamily. RNA methyltransferase RsmG family.

It localises to the cytoplasm. The enzyme catalyses guanosine(527) in 16S rRNA + S-adenosyl-L-methionine = N(7)-methylguanosine(527) in 16S rRNA + S-adenosyl-L-homocysteine. Its function is as follows. Specifically methylates the N7 position of guanine in position 527 of 16S rRNA. In Bartonella bacilliformis (strain ATCC 35685 / KC583 / Herrer 020/F12,63), this protein is Ribosomal RNA small subunit methyltransferase G.